The chain runs to 210 residues: Large ribosomal subunit protein uL3 (210 aa).

The tract at residues 134–153 (THGNSLSHRAPGSIGQNQTP) is disordered. Q151 bears the N5-methylglutamine mark.

It belongs to the universal ribosomal protein uL3 family. In terms of assembly, part of the 50S ribosomal subunit. Forms a cluster with proteins L14 and L19. Methylated by PrmB.

Its function is as follows. One of the primary rRNA binding proteins, it binds directly near the 3'-end of the 23S rRNA, where it nucleates assembly of the 50S subunit. The polypeptide is Large ribosomal subunit protein uL3 (Aeromonas salmonicida (strain A449)).